Reading from the N-terminus, the 166-residue chain is Transcription elongation factor GreA (166 aa).

Belongs to the GreA/GreB family.

Functionally, necessary for efficient RNA polymerase transcription elongation past template-encoded arresting sites. The arresting sites in DNA have the property of trapping a certain fraction of elongating RNA polymerases that pass through, resulting in locked ternary complexes. Cleavage of the nascent transcript by cleavage factors such as GreA or GreB allows the resumption of elongation from the new 3'terminus. GreA releases sequences of 2 to 3 nucleotides. This is Transcription elongation factor GreA from Anaeromyxobacter sp. (strain K).